A 403-amino-acid polypeptide reads, in one-letter code: Glucosyl-3-phosphoglycerate synthase (403 aa).

Position 150 (Asp-150) interacts with a divalent metal cation. 189–192 (GRVT) provides a ligand contact to (2R)-3-phosphoglycerate. His-273 serves as a coordination point for a divalent metal cation.

This sequence belongs to the glycosyltransferase 2 family. In terms of assembly, homodimer. Mn(2+) serves as cofactor. Co(2+) is required as a cofactor. It depends on Mg(2+) as a cofactor. The cofactor is Ni(2+).

It catalyses the reaction an NDP-alpha-D-glucose + (2R)-3-phosphoglycerate = (2R)-2-O-(alpha-D-glucopyranosyl)-3-phospho-glycerate + a ribonucleoside 5'-diphosphate + H(+). Involved in the biosynthesis of 6-O-methylglucose lipopolysaccarides (MGLPs). Catalyzes the transfer of a glucose (Glc) moiety from uridine diphosphate (UDP-Glc) to the position 2 of 3-phospho-D-glycerate (3-PGA) to form glucosyl-3-phosphoglycerate (GPG). GpgS is most active with UDP-glucose, followed by GDP-glucose, ADP-glucose, and to a lesser extent, TDP-glucose. 3-PGA is the only acceptor for these glucosyl donors. The protein is Glucosyl-3-phosphoglycerate synthase of Persephonella marina (strain DSM 14350 / EX-H1).